Here is a 76-residue protein sequence, read N- to C-terminus: Acyl carrier protein (76 aa).

The Carrier domain maps to 2–76 (SDIAERVKKI…QAIDYIQSHT (75 aa)). Residue S36 is modified to O-(pantetheine 4'-phosphoryl)serine.

This sequence belongs to the acyl carrier protein (ACP) family. In terms of processing, 4'-phosphopantetheine is transferred from CoA to a specific serine of apo-ACP by AcpS. This modification is essential for activity because fatty acids are bound in thioester linkage to the sulfhydryl of the prosthetic group.

The protein localises to the cytoplasm. Its pathway is lipid metabolism; fatty acid biosynthesis. Carrier of the growing fatty acid chain in fatty acid biosynthesis. This Methylococcus capsulatus (strain ATCC 33009 / NCIMB 11132 / Bath) protein is Acyl carrier protein.